Consider the following 113-residue polypeptide: UPF0122 protein LSEI_1603 (113 aa).

Belongs to the UPF0122 family.

Might take part in the signal recognition particle (SRP) pathway. This is inferred from the conservation of its genetic proximity to ftsY/ffh. May be a regulatory protein. The sequence is that of UPF0122 protein LSEI_1603 from Lacticaseibacillus paracasei (strain ATCC 334 / BCRC 17002 / CCUG 31169 / CIP 107868 / KCTC 3260 / NRRL B-441) (Lactobacillus paracasei).